We begin with the raw amino-acid sequence, 637 residues long: Pyrethroid hydrolase (637 aa).

It catalyses the reaction (-)-trans-permethrin + H2O = (3-phenoxyphenyl)methanol + (1S,3R)-3-(2,2-dichlorovinyl)-2,2-dimethylcyclopropanecarboxylate + H(+). With respect to regulation, inhibited by Hg(2+), Ag(+) and rho-chloromercuribenzoate. In terms of biological role, catalyzes the hydrolysis of pyrethroids pesticides. Hydrolyzes cis-permethrin at approximately equal rate to trans-permethrin. This chain is Pyrethroid hydrolase (estP), found in Klebsiella sp.